A 227-amino-acid polypeptide reads, in one-letter code: Cytochrome c oxidase subunit 2 (227 aa).

Over 1–14 (MAYPFQLGFQDATS) the chain is Mitochondrial intermembrane. The chain crosses the membrane as a helical span at residues 15–45 (PIMEELLHFHDHTLMIVFLISSLVLYIISLM). Residues 46–59 (LTTKLTHTSTMDAQ) are Mitochondrial matrix-facing. A helical transmembrane segment spans residues 60 to 87 (EVETIWTILPAIILILIALPSLRILYMM). Residues 88–227 (DEINNPSLTV…HFEKWSASML (140 aa)) lie on the Mitochondrial intermembrane side of the membrane. The Cu cation site is built by histidine 161, cysteine 196, glutamate 198, cysteine 200, histidine 204, and methionine 207. A Mg(2+)-binding site is contributed by glutamate 198.

It belongs to the cytochrome c oxidase subunit 2 family. In terms of assembly, component of the cytochrome c oxidase (complex IV, CIV), a multisubunit enzyme composed of 14 subunits. The complex is composed of a catalytic core of 3 subunits MT-CO1, MT-CO2 and MT-CO3, encoded in the mitochondrial DNA, and 11 supernumerary subunits COX4I, COX5A, COX5B, COX6A, COX6B, COX6C, COX7A, COX7B, COX7C, COX8 and NDUFA4, which are encoded in the nuclear genome. The complex exists as a monomer or a dimer and forms supercomplexes (SCs) in the inner mitochondrial membrane with NADH-ubiquinone oxidoreductase (complex I, CI) and ubiquinol-cytochrome c oxidoreductase (cytochrome b-c1 complex, complex III, CIII), resulting in different assemblies (supercomplex SCI(1)III(2)IV(1) and megacomplex MCI(2)III(2)IV(2)). Found in a complex with TMEM177, COA6, COX18, COX20, SCO1 and SCO2. Interacts with TMEM177 in a COX20-dependent manner. Interacts with COX20. Interacts with COX16. Cu cation serves as cofactor.

The protein localises to the mitochondrion inner membrane. The catalysed reaction is 4 Fe(II)-[cytochrome c] + O2 + 8 H(+)(in) = 4 Fe(III)-[cytochrome c] + 2 H2O + 4 H(+)(out). Functionally, component of the cytochrome c oxidase, the last enzyme in the mitochondrial electron transport chain which drives oxidative phosphorylation. The respiratory chain contains 3 multisubunit complexes succinate dehydrogenase (complex II, CII), ubiquinol-cytochrome c oxidoreductase (cytochrome b-c1 complex, complex III, CIII) and cytochrome c oxidase (complex IV, CIV), that cooperate to transfer electrons derived from NADH and succinate to molecular oxygen, creating an electrochemical gradient over the inner membrane that drives transmembrane transport and the ATP synthase. Cytochrome c oxidase is the component of the respiratory chain that catalyzes the reduction of oxygen to water. Electrons originating from reduced cytochrome c in the intermembrane space (IMS) are transferred via the dinuclear copper A center (CU(A)) of subunit 2 and heme A of subunit 1 to the active site in subunit 1, a binuclear center (BNC) formed by heme A3 and copper B (CU(B)). The BNC reduces molecular oxygen to 2 water molecules using 4 electrons from cytochrome c in the IMS and 4 protons from the mitochondrial matrix. This chain is Cytochrome c oxidase subunit 2 (MT-CO2), found in Ceratotherium simum (White rhinoceros).